We begin with the raw amino-acid sequence, 137 residues long: MTLTVRVISPDKTVWDAEADEVILPSTTGQLGILSGHAPLLTALDTGVLRVRTSKSQNWQAIALLGGFAEVEEDEVTILVNGGERGDTINLEEARTAYSQAQTKLNQVPAGDRQAQIQANQAFKRARARFQAAGGLA.

This sequence belongs to the ATPase epsilon chain family. F-type ATPases have 2 components, CF(1) - the catalytic core - and CF(0) - the membrane proton channel. CF(1) has five subunits: alpha(3), beta(3), gamma(1), delta(1), epsilon(1). CF(0) has three main subunits: a, b and c.

It localises to the cellular thylakoid membrane. In terms of biological role, produces ATP from ADP in the presence of a proton gradient across the membrane. In Nostoc sp. (strain PCC 7120 / SAG 25.82 / UTEX 2576), this protein is ATP synthase epsilon chain (atpC).